We begin with the raw amino-acid sequence, 379 residues long: Botryococcene C-methyltransferase (379 aa).

The chain crosses the membrane as a helical span at residues 17-37 (LLTWKGAAGLAAAVALGYIII).

The protein belongs to the class I-like SAM-binding methyltransferase superfamily. Erg6/SMT family.

The protein resides in the microsome membrane. The catalysed reaction is C30 botryococcene + 2 S-adenosyl-L-methionine = 3,20-dimethyl-1,2,21,22-tetradehydro-2,3,20,21-tetrahydrobotryococcene + 2 S-adenosyl-L-homocysteine + 2 H(+). Functionally, converts botryococcene to mono- and dimethyl derivatives, but not to tri- and tetramethylated products. Unable to methylate cycloartenol, zymosterol or lanosterol, but can also use squalene as substrate. Methylates both C-3 and C22 positions, but only C-3 position in monomethylated squalenes. In contrast, monomethylated botryococcene occured mainly at the C-20 position yielding showacene, but also at the C-3 position yielding isoshowacene. The chain is Botryococcene C-methyltransferase (TMT-3) from Botryococcus braunii (Green alga).